An 85-amino-acid chain; its full sequence is Small ribosomal subunit protein bS18 (85 aa).

Residues 1–12 (MAFAQAGGGGGQ) are compositionally biased toward gly residues. A disordered region spans residues 1-22 (MAFAQAGGGGGQRRPFFRRRKT).

The protein belongs to the bacterial ribosomal protein bS18 family. In terms of assembly, part of the 30S ribosomal subunit. Forms a tight heterodimer with protein bS6.

Binds as a heterodimer with protein bS6 to the central domain of the 16S rRNA, where it helps stabilize the platform of the 30S subunit. The polypeptide is Small ribosomal subunit protein bS18 (Azorhizobium caulinodans (strain ATCC 43989 / DSM 5975 / JCM 20966 / LMG 6465 / NBRC 14845 / NCIMB 13405 / ORS 571)).